The chain runs to 209 residues: Ubiquinone biosynthesis protein COQ4 homolog 2, mitochondrial (209 aa).

Residues histidine 118, aspartate 119, histidine 122, and glutamate 134 each contribute to the Zn(2+) site.

Belongs to the COQ4 family. In terms of assembly, component of a multi-subunit COQ enzyme complex. Zn(2+) serves as cofactor.

Its subcellular location is the mitochondrion inner membrane. It carries out the reaction a 4-hydroxy-3-methoxy-5-(all-trans-polyprenyl)benzoate + H(+) = a 2-methoxy-6-(all-trans-polyprenyl)phenol + CO2. Its pathway is cofactor biosynthesis; ubiquinone biosynthesis. Lyase that catalyzes the C1-decarboxylation of 4-hydroxy-3-methoxy-5-(all-trans-polyprenyl)benzoic acid into 2-methoxy-6-(all-trans-polyprenyl)phenol during ubiquinone biosynthesis. The polypeptide is Ubiquinone biosynthesis protein COQ4 homolog 2, mitochondrial (Paramecium tetraurelia).